Reading from the N-terminus, the 239-residue chain is Ribosomal RNA small subunit methyltransferase G (239 aa).

S-adenosyl-L-methionine-binding positions include Gly77, Phe82, 128–129, and Arg146; that span reads AE. The disordered stretch occupies residues 216–239; that stretch reads KRRQTSKKYPRKPGTPNKSPLVES.

Belongs to the methyltransferase superfamily. RNA methyltransferase RsmG family.

The protein localises to the cytoplasm. Its function is as follows. Specifically methylates the N7 position of guanine in position 535 of 16S rRNA. In Staphylococcus epidermidis (strain ATCC 35984 / DSM 28319 / BCRC 17069 / CCUG 31568 / BM 3577 / RP62A), this protein is Ribosomal RNA small subunit methyltransferase G.